The chain runs to 60 residues: MDDKDLKLILHKTFIEIYSDLEELADIAKKGKPSMEKYVEEIEQRCKQNILAIEIQMKIK.

In terms of biological role, stabilizes the phosphorylated form of DegU, leading to enhanced production of levansucrase, alkaline protease, and neutral protease. The polypeptide is Regulatory protein DegR (degR) (Bacillus subtilis subsp. natto).